The chain runs to 698 residues: Adhesion G protein-coupled receptor F4 (698 aa).

The first 19 residues, 1–19 (MKPWIAMVCCLVFFLTTEC), serve as a signal peptide directing secretion. Residues 20–409 (SHSKPKTHRK…VKNTILNHIT (390 aa)) lie on the Extracellular side of the membrane. N-linked (GlcNAc...) asparagine glycosylation is found at Asn-61, Asn-168, Asn-213, Asn-268, Asn-290, Asn-344, and Asn-375. The 152-residue stretch at 250 to 401 (RISHSSSEHS…SILMSSKPVK (152 aa)) folds into the GAIN-B domain. 2 disulfide bridges follow: Cys-353–Cys-380 and Cys-368–Cys-382. A GPS region spans residues 353 to 401 (CVSWDPATGQWDESPCTVMSDINSTVKCRCRHTKAVTSFSILMSSKPVK). The helical transmembrane segment at 410-430 (FIGLSISIFSLVLCLVIEAIV) threads the bilayer. Residues 431-444 (WSRVVVTEISYMRH) lie on the Cytoplasmic side of the membrane. Residues 445–465 (VCIVNIAVSLLTANVWFIIGS) form a helical membrane-spanning segment. N-linked (GlcNAc...) asparagine glycosylation occurs at Asn-466. The Extracellular portion of the chain corresponds to 466–486 (NFSANVQEDHKWCVAVTFLCH). The helical transmembrane segment at 487–507 (FFFLSLFFWMLFKALLIVYGI) threads the bilayer. At 508–518 (LVVFRRMMKSR) the chain is on the cytoplasmic side. A helical transmembrane segment spans residues 519-539 (MMAIGFAIGYGCPLVIAVITV). Over 540–566 (TVTEPGEGYTRKDACWLNWNQTKALFA) the chain is Extracellular. Asn-559 is a glycosylation site (N-linked (GlcNAc...) asparagine). A helical membrane pass occupies residues 567–587 (FAIPALAIVAVNLLVVLAVAI). The Cytoplasmic portion of the chain corresponds to 588–611 (NTQRPLIGSSKSQDMAIVFRISKN). Residues 612 to 632 (VAILTPLLGLTWGFGLTTLLE) traverse the membrane as a helical segment. The Extracellular segment spans residues 633 to 635 (GVH). Residues 636-656 (LVFHIIFALLNAFQGFFILLF) traverse the membrane as a helical segment. Residues 657–698 (GTIMDHKIRDALRMRVSSLKGKSRAAEKVSLSPANGSRILNR) are Cytoplasmic-facing.

This sequence belongs to the G-protein coupled receptor 2 family. Adhesion G-protein coupled receptor (ADGR) subfamily. Expressed in squamous epithelia.

Its subcellular location is the membrane. In terms of biological role, orphan receptor. This is Adhesion G protein-coupled receptor F4 (Adgrf4) from Mus musculus (Mouse).